A 270-amino-acid polypeptide reads, in one-letter code: MILMSGPCVIESYEALSAVAQALKPLSEKAHIDFYFKASFDKANRTSLESYRGPGLEKGLELLSEIKKQFGYKIITDIHESYQAKHIAKVADVIQIPAFLCRQTDLIVEVAKTERIVNIKKGQFMNPSDMQHSVLKAIKTRGGTQATYEQSQKYGIWLTERGSTFGYGNLVVDMRSLVIMRSFAPVIFDATHSVQMPGAAGGKSGGDSSFVPYLARAAAAVGVDGFFMETHLNPKEALSDGPNMVQTNALIPLIEQLYDIENLTQHKNGK.

The protein belongs to the KdsA family.

It is found in the cytoplasm. The catalysed reaction is D-arabinose 5-phosphate + phosphoenolpyruvate + H2O = 3-deoxy-alpha-D-manno-2-octulosonate-8-phosphate + phosphate. It participates in carbohydrate biosynthesis; 3-deoxy-D-manno-octulosonate biosynthesis; 3-deoxy-D-manno-octulosonate from D-ribulose 5-phosphate: step 2/3. It functions in the pathway bacterial outer membrane biogenesis; lipopolysaccharide biosynthesis. The sequence is that of 2-dehydro-3-deoxyphosphooctonate aldolase from Helicobacter hepaticus (strain ATCC 51449 / 3B1).